The following is a 1426-amino-acid chain: DNA-directed RNA polymerase subunit beta' (1426 aa).

Residues Cys-71, Cys-73, Cys-86, and Cys-89 each coordinate Zn(2+). Mg(2+) is bound by residues Asp-461, Asp-463, and Asp-465. Residues Cys-814, Cys-888, Cys-895, and Cys-898 each contribute to the Zn(2+) site. The tract at residues 1392–1426 (ADPIAAAESAIGLGGGEQPATSETGAGGSDPSEEG) is disordered.

Belongs to the RNA polymerase beta' chain family. The RNAP catalytic core consists of 2 alpha, 1 beta, 1 beta' and 1 omega subunit. When a sigma factor is associated with the core the holoenzyme is formed, which can initiate transcription. Requires Mg(2+) as cofactor. Zn(2+) is required as a cofactor.

The enzyme catalyses RNA(n) + a ribonucleoside 5'-triphosphate = RNA(n+1) + diphosphate. DNA-dependent RNA polymerase catalyzes the transcription of DNA into RNA using the four ribonucleoside triphosphates as substrates. The polypeptide is DNA-directed RNA polymerase subunit beta' (Alkalilimnicola ehrlichii (strain ATCC BAA-1101 / DSM 17681 / MLHE-1)).